Consider the following 632-residue polypeptide: Phosphomethylpyrimidine synthase (632 aa).

Residues asparagine 237, methionine 266, tyrosine 295, histidine 331, 351 to 353 (SRG), 392 to 395 (DGLR), and glutamate 431 contribute to the substrate site. Histidine 435 is a binding site for Zn(2+). Tyrosine 458 serves as a coordination point for substrate. Histidine 499 is a Zn(2+) binding site. Residues cysteine 579, cysteine 582, and cysteine 587 each contribute to the [4Fe-4S] cluster site.

The protein belongs to the ThiC family. Homodimer. [4Fe-4S] cluster is required as a cofactor.

It catalyses the reaction 5-amino-1-(5-phospho-beta-D-ribosyl)imidazole + S-adenosyl-L-methionine = 4-amino-2-methyl-5-(phosphooxymethyl)pyrimidine + CO + 5'-deoxyadenosine + formate + L-methionine + 3 H(+). Its pathway is cofactor biosynthesis; thiamine diphosphate biosynthesis. Functionally, catalyzes the synthesis of the hydroxymethylpyrimidine phosphate (HMP-P) moiety of thiamine from aminoimidazole ribotide (AIR) in a radical S-adenosyl-L-methionine (SAM)-dependent reaction. This chain is Phosphomethylpyrimidine synthase, found in Nitrosomonas eutropha (strain DSM 101675 / C91 / Nm57).